Here is a 493-residue protein sequence, read N- to C-terminus: Transmembrane protein 184 homolog DDB_G0284525 (493 aa).

Polar residues predominate over residues 1–10 (MTQESSSSNH). Residues 1-25 (MTQESSSSNHYVDESSFDNNNNNNN) form a disordered region. 7 helical membrane-spanning segments follow: residues 46-66 (VPALYAMFALASLFVLLATIL), 87-107 (IVRIVFMIPIYAIYSLLSLLL), 119-139 (DCYEAYVLYMFFALCVSYGGG), 180-200 (YVLVRPAVTLASAIFEIFGLY), 212-232 (FYNAFIINVSVTVALYIVVLF), 254-274 (IVVFFCFWQSIAISGMTNFGW), and 293-313 (FLICFEMFGVAILHQYAFPYE). Asn415 and Asn416 each carry an N-linked (GlcNAc...) asparagine glycan.

The protein belongs to the TMEM184 family.

The protein resides in the cell membrane. Probable transporter. The polypeptide is Transmembrane protein 184 homolog DDB_G0284525 (tmem184A) (Dictyostelium discoideum (Social amoeba)).